Reading from the N-terminus, the 85-residue chain is Large ribosomal subunit protein bL31B (85 aa).

The protein belongs to the bacterial ribosomal protein bL31 family. Type B subfamily. Part of the 50S ribosomal subunit.

This is Large ribosomal subunit protein bL31B from Staphylococcus haemolyticus (strain JCSC1435).